Consider the following 400-residue polypeptide: Phosphoglycerate kinase (400 aa).

Substrate-binding positions include 22-24, Arg-38, 61-64, Arg-119, and Arg-152; these read DFN and HLGR. Residues Lys-205, Gly-296, Glu-327, and 353 to 356 each bind ATP; that span reads GGDT.

The protein belongs to the phosphoglycerate kinase family. As to quaternary structure, monomer.

It is found in the cytoplasm. The enzyme catalyses (2R)-3-phosphoglycerate + ATP = (2R)-3-phospho-glyceroyl phosphate + ADP. It participates in carbohydrate degradation; glycolysis; pyruvate from D-glyceraldehyde 3-phosphate: step 2/5. The protein is Phosphoglycerate kinase of Campylobacter jejuni subsp. jejuni serotype O:2 (strain ATCC 700819 / NCTC 11168).